The primary structure comprises 82 residues: Small ribosomal subunit protein bS16 (82 aa).

It belongs to the bacterial ribosomal protein bS16 family.

This chain is Small ribosomal subunit protein bS16, found in Mannheimia succiniciproducens (strain KCTC 0769BP / MBEL55E).